The primary structure comprises 279 residues: Tryptophan synthase alpha chain (279 aa).

Active-site proton acceptor residues include glutamate 50 and aspartate 61.

This sequence belongs to the TrpA family. In terms of assembly, tetramer of two alpha and two beta chains.

It carries out the reaction (1S,2R)-1-C-(indol-3-yl)glycerol 3-phosphate + L-serine = D-glyceraldehyde 3-phosphate + L-tryptophan + H2O. Its pathway is amino-acid biosynthesis; L-tryptophan biosynthesis; L-tryptophan from chorismate: step 5/5. The alpha subunit is responsible for the aldol cleavage of indoleglycerol phosphate to indole and glyceraldehyde 3-phosphate. This chain is Tryptophan synthase alpha chain, found in Brucella melitensis biotype 2 (strain ATCC 23457).